Consider the following 338-residue polypeptide: Protein FosB (338 aa).

2 disordered regions span residues 1 to 54 and 80 to 162; these read MFQA…PGSF and AQSQ…RVRR. Residues 13-31 are compositionally biased toward polar residues; it reads SRCSSSPSAESQYLSSVDS. Serine 27 is subject to Phosphoserine. Gly residues predominate over residues 113–124; that stretch reads SSGGASGSGGPS. Residues 125–137 show a composition bias toward low complexity; it reads TSGTTSGPGPARP. Positions 155-218 constitute a bZIP domain; that stretch reads EEKRRVRRER…ERLEFVLVAH (64 aa). The tract at residues 157-182 is basic motif; that stretch reads KRRVRRERNKLAAAKCRNRRRELTDR. The leucine-zipper stretch occupies residues 183–211; it reads LQAETDQLEEEKAELESEIAELQKEKERL. Disordered regions lie at residues 222–271 and 315–338; these read CKIP…TSQD and AGTQ…LLAL. Residues 256–265 are compositionally biased toward pro residues; that stretch reads LPPPPAPPLP. Polar residues predominate over residues 318–338; it reads QRPSGSDQPTDPLNSPSLLAL.

It belongs to the bZIP family. Fos subfamily. As to quaternary structure, heterodimer; binds to DNA as heterodimer. Component of an AP-1 transcription factor complex; composed of FOS-JUN heterodimers. As part of the AP-1 transcription factor complex, forms heterodimers with JUN, JUNB or JUND, thereby binding to the AP-1 consensus sequence and stimulating transcription. Interacts with the BAF multiprotein chromatin-remodeling complex subunits SMARCB1 and SMARCD1. Interacts with ARID1A and JUN. In terms of processing, phosphorylated.

Its subcellular location is the nucleus. In terms of biological role, heterodimerizes with proteins of the JUN family to form an AP-1 transcription factor complex, thereby enhancing their DNA binding activity to an AP-1 consensus sequence 5'-TGA[GC]TCA-3' and enhancing their transcriptional activity. Exhibits transactivation activity in vitro. As part of the AP-1 complex, facilitates enhancer selection together with cell-type-specific transcription factors by collaboratively binding to nucleosomal enhancers and recruiting the SWI/SNF (BAF) chromatin remodeling complex to establish accessible chromatin. Together with JUN, plays a role in activation-induced cell death of T cells by binding to the AP-1 promoter site of FASLG/CD95L, and inducing its transcription in response to activation of the TCR/CD3 signaling pathway. Involved in the display of nurturing behavior towards newborns. May play a role in neurogenesis in the hippocampus and in learning and memory-related tasks by regulating the expression of various genes involved in neurogenesis, depression and epilepsy. Implicated in behavioral responses related to morphine reward and spatial memory. The sequence is that of Protein FosB (FOSB) from Canis lupus familiaris (Dog).